The chain runs to 275 residues: Formamidopyrimidine-DNA glycosylase (275 aa).

Pro2 acts as the Schiff-base intermediate with DNA in catalysis. Residue Glu3 is the Proton donor of the active site. Catalysis depends on Lys59, which acts as the Proton donor; for beta-elimination activity. DNA-binding residues include His92, Arg111, and Arg155. The segment at 240–274 adopts an FPG-type zinc-finger fold; that stretch reads NVYGRAGKACPKCGTTIEKQVLGQRSSYYCPQCQR. Arg264 (proton donor; for delta-elimination activity) is an active-site residue.

The protein belongs to the FPG family. As to quaternary structure, monomer. It depends on Zn(2+) as a cofactor.

It carries out the reaction Hydrolysis of DNA containing ring-opened 7-methylguanine residues, releasing 2,6-diamino-4-hydroxy-5-(N-methyl)formamidopyrimidine.. The catalysed reaction is 2'-deoxyribonucleotide-(2'-deoxyribose 5'-phosphate)-2'-deoxyribonucleotide-DNA = a 3'-end 2'-deoxyribonucleotide-(2,3-dehydro-2,3-deoxyribose 5'-phosphate)-DNA + a 5'-end 5'-phospho-2'-deoxyribonucleoside-DNA + H(+). In terms of biological role, involved in base excision repair of DNA damaged by oxidation or by mutagenic agents. Acts as a DNA glycosylase that recognizes and removes damaged bases. Has a preference for oxidized purines, such as 7,8-dihydro-8-oxoguanine (8-oxoG). Has AP (apurinic/apyrimidinic) lyase activity and introduces nicks in the DNA strand. Cleaves the DNA backbone by beta-delta elimination to generate a single-strand break at the site of the removed base with both 3'- and 5'-phosphates. This chain is Formamidopyrimidine-DNA glycosylase, found in Magnetococcus marinus (strain ATCC BAA-1437 / JCM 17883 / MC-1).